Here is a 61-residue protein sequence, read N- to C-terminus: Temporin-MT3 (61 aa).

The N-terminal stretch at 1–22 (MFTLKKPLLLLFFLGTINLSLC) is a signal peptide. Residues 23 to 44 (EQERNAEEERRDEPDERNAEVE) constitute a propeptide, removed in mature form. Residue L59 is modified to Leucine amide.

Belongs to the frog skin active peptide (FSAP) family. Temporin subfamily. Expressed by the skin glands.

The protein resides in the secreted. Functionally, antimicrobial peptide. This is Temporin-MT3 from Amolops mantzorum (Sichuan torrent frog).